A 202-amino-acid chain; its full sequence is T-cell surface glycoprotein CD3 epsilon chain (202 aa).

The signal sequence occupies residues 1-21; the sequence is MPSGSLWRVLGLCLLSVGAWG. Over 22–125 the chain is Extracellular; sequence QEDNEDPLEP…NCVEVDTMTA (104 aa). Residues 33–107 form the Ig-like domain; the sequence is PQTSASARYK…TSNSLEKNYL (75 aa). C54 and C96 are disulfide-bonded. A helical transmembrane segment spans residues 126–146; sequence VAIVVADVCITLGFLLLVYYW. At 147–202 the chain is on the cytoplasmic side; it reads SKNKKASSVTMMRGPGAGGRPRGQNKEKPPPVPNPDYEPIRKGQQDLYSGLNQRGI. The tract at residues 156-202 is disordered; it reads TMMRGPGAGGRPRGQNKEKPPPVPNPDYEPIRKGQQDLYSGLNQRGI. Residues 170–187 form an NUMB-binding region region; it reads QNKEKPPPVPNPDYEPIR. In terms of domain architecture, ITAM spans 173 to 200; the sequence is EKPPPVPNPDYEPIRKGQQDLYSGLNQR. The interval 174 to 181 is proline-rich sequence; it reads KPPPVPNP. A phosphotyrosine mark is found at Y183 and Y194. Over residues 192–202 the composition is skewed to polar residues; sequence DLYSGLNQRGI.

As to quaternary structure, the TCR-CD3 complex is composed of a CD3D/CD3E and a CD3G/CD3E heterodimers that preferentially associate with TCRalpha and TCRbeta, respectively, to form TCRalpha/CD3E/CD3G and TCRbeta/CD3G/CD3E trimers. In turn, the hexamer interacts with CD3Z homodimer to form the TCR-CD3 complex. Alternatively, TCRalpha and TCRbeta can be replaced by TCRgamma and TCRdelta. Interacts with CD6. Interacts (via Proline-rich sequence) with NCK1; the interaction is ligand dependent but independent of tyrosine kinase activation. In terms of processing, phosphorylated on Tyr residues after T-cell receptor triggering by LCK in association with CD4/CD8.

It localises to the cell membrane. Part of the TCR-CD3 complex present on T-lymphocyte cell surface that plays an essential role in adaptive immune response. When antigen presenting cells (APCs) activate T-cell receptor (TCR), TCR-mediated signals are transmitted across the cell membrane by the CD3 chains CD3D, CD3E, CD3G and CD3Z. All CD3 chains contain immunoreceptor tyrosine-based activation motifs (ITAMs) in their cytoplasmic domain. Upon TCR engagement, these motifs become phosphorylated by Src family protein tyrosine kinases LCK and FYN, resulting in the activation of downstream signaling pathways. In addition of this role of signal transduction in T-cell activation, CD3E plays an essential role in correct T-cell development. Also participates in internalization and cell surface down-regulation of TCR-CD3 complexes via endocytosis sequences present in CD3E cytosolic region. In addition to its role as a TCR coreceptor, it serves as a receptor for ITPRIPL1. Ligand recognition inhibits T-cell activation by promoting interaction with NCK1, which prevents CD3E-ZAP70 interaction and blocks the ERK-NFkB signaling cascade and calcium influx. The chain is T-cell surface glycoprotein CD3 epsilon chain (CD3E) from Felis catus (Cat).